A 737-amino-acid polypeptide reads, in one-letter code: Exostosin-1c (737 aa).

Residues 1-6 (MQARKK) are Cytoplasmic-facing. The helical; Signal-anchor for type II membrane protein transmembrane segment at 7–27 (YVLLGLCTCCWILLYYWAGLQ) threads the bilayer. The Lumenal segment spans residues 28–737 (ERLLGLITHR…RKRYKDLERV (710 aa)). N-linked (GlcNAc...) asparagine glycans are attached at residues Asn194 and Asn322. The UDP-N-acetyl-alpha-D-glucosamine site is built by Arg432, Arg540, Asp556, Glu557, Asp558, Glu644, Asp645, and Arg692. Residue Asp558 coordinates Mn(2+). Cys643 and Cys695 form a disulfide bridge. Asp645 is a catalytic residue.

Belongs to the glycosyltransferase 47 family. It depends on Mn(2+) as a cofactor.

It is found in the endoplasmic reticulum membrane. The enzyme catalyses 3-O-{[(1-&gt;4)-beta-D-GlcA-(1-&gt;4)-alpha-D-GlcNAc](n)-(1-&gt;4)-beta-D-GlcA-(1-&gt;3)-beta-D-Gal-(1-&gt;3)-beta-D-Gal-(1-&gt;4)-beta-D-Xyl}-L-seryl-[protein] + UDP-N-acetyl-alpha-D-glucosamine = 3-O-{alpha-D-GlcNAc-[(1-&gt;4)-beta-D-GlcA-(1-&gt;4)-alpha-D-GlcNAc](n)-(1-&gt;4)-beta-D-GlcA-(1-&gt;3)-beta-D-Gal-(1-&gt;3)-beta-D-Gal-(1-&gt;4)-beta-D-Xyl}-L-seryl-[protein] + UDP + H(+). It carries out the reaction 3-O-{alpha-D-GlcNAc-[(1-&gt;4)-beta-D-GlcA-(1-&gt;4)-alpha-D-GlcNAc](n)-(1-&gt;4)-beta-D-GlcA-(1-&gt;3)-beta-D-Gal-(1-&gt;3)-beta-D-Gal-(1-&gt;4)-beta-D-Xyl}-L-seryl-[protein] + UDP-alpha-D-glucuronate = 3-O-{[(1-&gt;4)-beta-D-GlcA-(1-&gt;4)-alpha-D-GlcNAc](n+1)-(1-&gt;4)-beta-D-GlcA-(1-&gt;3)-beta-D-Gal-(1-&gt;3)-beta-D-Gal-(1-&gt;4)-beta-D-Xyl}-L-seryl-[protein] + UDP + H(+). It functions in the pathway protein modification; protein glycosylation. In terms of biological role, glycosyltransferase required for the biosynthesis of heparan-sulfate. This Danio rerio (Zebrafish) protein is Exostosin-1c (ext1c).